The chain runs to 294 residues: Acetyl-coenzyme A carboxylase carboxyl transferase subunit beta (294 aa).

The 270-residue stretch at 25-294 (VWTKCTSCEQ…PLVVPVDGSH (270 aa)) folds into the CoA carboxyltransferase N-terminal domain. Cysteine 29, cysteine 32, cysteine 48, and cysteine 51 together coordinate Zn(2+). A C4-type zinc finger spans residues 29–51 (CTSCEQVLYSAELERNLEVCPKC).

It belongs to the AccD/PCCB family. In terms of assembly, acetyl-CoA carboxylase is a heterohexamer composed of biotin carboxyl carrier protein (AccB), biotin carboxylase (AccC) and two subunits each of ACCase subunit alpha (AccA) and ACCase subunit beta (AccD). Requires Zn(2+) as cofactor.

It localises to the cytoplasm. The enzyme catalyses N(6)-carboxybiotinyl-L-lysyl-[protein] + acetyl-CoA = N(6)-biotinyl-L-lysyl-[protein] + malonyl-CoA. The protein operates within lipid metabolism; malonyl-CoA biosynthesis; malonyl-CoA from acetyl-CoA: step 1/1. Component of the acetyl coenzyme A carboxylase (ACC) complex. Biotin carboxylase (BC) catalyzes the carboxylation of biotin on its carrier protein (BCCP) and then the CO(2) group is transferred by the transcarboxylase to acetyl-CoA to form malonyl-CoA. The protein is Acetyl-coenzyme A carboxylase carboxyl transferase subunit beta of Aliivibrio fischeri (strain ATCC 700601 / ES114) (Vibrio fischeri).